The primary structure comprises 139 residues: Maximins 4/H3 type 5 (139 aa).

An N-terminal signal peptide occupies residues methionine 1–alanine 18. A propeptide spanning residues arginine 19–arginine 43 is cleaved from the precursor. An Asparagine amide modification is found at asparagine 70. Residues threonine 74–arginine 118 constitute a propeptide that is removed on maturation. Isoleucine 138 is modified (isoleucine amide).

It belongs to the bombinin family. Expressed by the skin glands.

The protein localises to the secreted. Maximin-4 shows antibacterial activity against both Gram-positive and Gram-negative bacteria. It also shows antimicrobial activity against the fungus C.albicans, but not against A.flavus nor P.uticale. It has little hemolytic activity. It does not possess a significant cytotoxicity against tumor cell lines. It does not possess a significant anti-HIV activity. In terms of biological role, maximin-H3 shows antibacterial activity against both Gram-positive and Gram-negative bacteria. It also shows antimicrobial activity against the fungus C.albicans. Shows strong hemolytic activity. This is Maximins 4/H3 type 5 from Bombina maxima (Giant fire-bellied toad).